Consider the following 386-residue polypeptide: O-phospho-L-seryl-tRNA:Cys-tRNA synthase (386 aa).

Pyridoxal 5'-phosphate is bound by residues 89 to 90 (AR), N196, and 219 to 221 (SGH). K222 is modified (N6-(pyridoxal phosphate)lysine).

The protein belongs to the SepCysS family. Homodimer. Interacts with SepRS. Requires pyridoxal 5'-phosphate as cofactor.

It carries out the reaction O-phospho-L-seryl-tRNA(Cys) + hydrogen sulfide + H(+) = L-cysteinyl-tRNA(Cys) + phosphate. Converts O-phospho-L-seryl-tRNA(Cys) (Sep-tRNA(Cys)) to L-cysteinyl-tRNA(Cys) (Cys-tRNA(Cys)). The polypeptide is O-phospho-L-seryl-tRNA:Cys-tRNA synthase (Methanosarcina acetivorans (strain ATCC 35395 / DSM 2834 / JCM 12185 / C2A)).